Consider the following 873-residue polypeptide: K(+)/H(+) antiporter 1 (873 aa).

Residues 1–23 (MANTVGGILSGVNPFHYNSSSPL) lie on the Extracellular side of the membrane. Residues 24 to 44 (TLFLFQACLILLVCNLIHIPF) form a helical membrane-spanning segment. Over 45–51 (SMMRQPK) the chain is Cytoplasmic. Residues 52-72 (VISEVISGVILGPTIFGQIPN) form a helical membrane-spanning segment. The Extracellular portion of the chain corresponds to 73–82 (YTNTIFPTSS). Residues 83–103 (IPGLNLVANLGIILFMFFLGL) traverse the membrane as a helical segment. Over 104 to 116 (EVDIAFIKKHLKK) the chain is Cytoplasmic. Residues 117–137 (ALVIGIVTLAVPFGFGCLLAI) form a helical membrane-spanning segment. Topologically, residues 138–154 (PLFHTYANKTEGERHIK) are extracellular. The helical transmembrane segment at 155-175 (FSVFMVFIAVSISVTAFPVLC) threads the bilayer. Residues 176–188 (RILNELRLIKDRA) are Cytoplasmic-facing. A helical membrane pass occupies residues 189-209 (GIVVLAAGIINDIMGWILLAL). Topologically, residues 210–220 (SIILSSAEGSP) are extracellular. The helical transmembrane segment at 221-241 (VNTVYILLITFAWFLIYFFPL) threads the bilayer. Residues 242–267 (KYLLRWVLIRTHELDRSKPSPLATMC) lie on the Cytoplasmic side of the membrane. The chain crosses the membrane as a helical span at residues 268–288 (ILFIMFISAYFTDIIGVHPIF). Residues 289-316 (GAFIAGLVVPRDDHYVVKLTERMEDIPN) lie on the Extracellular side of the membrane. A helical membrane pass occupies residues 317–337 (IVFIPIYFAVAGLNVDLTLLN). The Cytoplasmic segment spans residues 338 to 341 (EGRD). The helical transmembrane segment at 342-362 (WGYVFATIGIAIFTKIISGTL) threads the bilayer. The Extracellular portion of the chain corresponds to 363-375 (TAKLTGLFWREAT). Residues 376 to 396 (AAGVLMSCKGIVEIVVLTVGL) form a helical membrane-spanning segment. At 397 to 404 (NAGIISRK) the chain is on the cytoplasmic side. A helical membrane pass occupies residues 405–425 (IFGMFVLMALVSTFVTTPLTQ). The Extracellular portion of the chain corresponds to 426-726 (LVYPDSYRDG…DRFKRKRFNL (301 aa)). Phosphoserine is present on Ser557. Lys562 participates in a covalent cross-link: Glycyl lysine isopeptide (Lys-Gly) (interchain with G-Cter in ubiquitin). A helical transmembrane segment spans residues 727–747 (LLPKPYLTQSDYLGLYLLLLI). The Cytoplasmic segment spans residues 748–873 (CYRDGYNNDN…TLIVHHFSSE (126 aa)).

It belongs to the monovalent cation:proton antiporter 2 (CPA2) transporter (TC 2.A.37) family.

The protein localises to the membrane. In terms of biological role, potassium-proton antiport. In Saccharomyces cerevisiae (strain ATCC 204508 / S288c) (Baker's yeast), this protein is K(+)/H(+) antiporter 1 (KHA1).